The primary structure comprises 347 residues: 4-hydroxythreonine-4-phosphate dehydrogenase (347 aa).

2 residues coordinate substrate: histidine 137 and threonine 138. 3 residues coordinate a divalent metal cation: histidine 174, histidine 219, and histidine 274. 3 residues coordinate substrate: lysine 282, asparagine 291, and arginine 300.

It belongs to the PdxA family. In terms of assembly, homodimer. Zn(2+) serves as cofactor. Requires Mg(2+) as cofactor. Co(2+) is required as a cofactor.

Its subcellular location is the cytoplasm. It carries out the reaction 4-(phosphooxy)-L-threonine + NAD(+) = 3-amino-2-oxopropyl phosphate + CO2 + NADH. It functions in the pathway cofactor biosynthesis; pyridoxine 5'-phosphate biosynthesis; pyridoxine 5'-phosphate from D-erythrose 4-phosphate: step 4/5. In terms of biological role, catalyzes the NAD(P)-dependent oxidation of 4-(phosphooxy)-L-threonine (HTP) into 2-amino-3-oxo-4-(phosphooxy)butyric acid which spontaneously decarboxylates to form 3-amino-2-oxopropyl phosphate (AHAP). The sequence is that of 4-hydroxythreonine-4-phosphate dehydrogenase from Cupriavidus pinatubonensis (strain JMP 134 / LMG 1197) (Cupriavidus necator (strain JMP 134)).